We begin with the raw amino-acid sequence, 248 residues long: Pyridoxine 5'-phosphate synthase (248 aa).

3-amino-2-oxopropyl phosphate is bound at residue Asn-10. 12 to 13 is a binding site for 1-deoxy-D-xylulose 5-phosphate; sequence DH. Arg-21 serves as a coordination point for 3-amino-2-oxopropyl phosphate. His-46 acts as the Proton acceptor in catalysis. 1-deoxy-D-xylulose 5-phosphate-binding residues include Arg-48 and His-53. The active-site Proton acceptor is the Glu-73. Residue Thr-103 participates in 1-deoxy-D-xylulose 5-phosphate binding. Catalysis depends on His-194, which acts as the Proton donor. Residues Gly-195 and 216–217 contribute to the 3-amino-2-oxopropyl phosphate site; that span reads GH.

The protein belongs to the PNP synthase family. Homooctamer; tetramer of dimers.

The protein resides in the cytoplasm. It catalyses the reaction 3-amino-2-oxopropyl phosphate + 1-deoxy-D-xylulose 5-phosphate = pyridoxine 5'-phosphate + phosphate + 2 H2O + H(+). The protein operates within cofactor biosynthesis; pyridoxine 5'-phosphate biosynthesis; pyridoxine 5'-phosphate from D-erythrose 4-phosphate: step 5/5. Its function is as follows. Catalyzes the complicated ring closure reaction between the two acyclic compounds 1-deoxy-D-xylulose-5-phosphate (DXP) and 3-amino-2-oxopropyl phosphate (1-amino-acetone-3-phosphate or AAP) to form pyridoxine 5'-phosphate (PNP) and inorganic phosphate. The polypeptide is Pyridoxine 5'-phosphate synthase (Legionella pneumophila (strain Lens)).